Consider the following 487-residue polypeptide: MVYNNLYELTAKELRDKFLSNELSAEEIVNSFYERIEKVEDKIKSFVSLRKDKALDEARKLDEKRKNGEKLGRLAGIPIAIKDNILMEGQKSTSCSKILENYIGIYDATVVKKLKEEDAIIIGITNMDEFAMGSTTKTSFHHKTSNPWDLNRVPGGSSGGAAASVAAQEVPISLGSDTGGSVRQPASFCGVVGFKPTYGRVSRYGLMAFASSLDQIGTLAKTVEDIAICMNVIAGVDDYDATVSKKEVPDYTEFLNKDIKGLKIGLPKEYFIEGLNPEIKNVVDNSVKALKELGAEVVEISLPHTKYAVPTYYVLAPAEASSNLARFDGIRYGYRAKDYTDLESLYVKTRSEGFGAEVKRRIMIGTYVLSAGFYDAYFKKAQKVRTLIKQDFENVLNEVDVILTPVAPSVAFKLSDTKTPIELYLEDIFTISANLAGVPAISLPGGLVDNLPVGVQFMGKPFDEEILIKIADALEKKIGRLNLPKLD.

Residues Lys-82 and Ser-157 each act as charge relay system in the active site. Ser-181 (acyl-ester intermediate) is an active-site residue.

The protein belongs to the amidase family. GatA subfamily. Heterotrimer of A, B and C subunits.

The enzyme catalyses L-glutamyl-tRNA(Gln) + L-glutamine + ATP + H2O = L-glutaminyl-tRNA(Gln) + L-glutamate + ADP + phosphate + H(+). In terms of biological role, allows the formation of correctly charged Gln-tRNA(Gln) through the transamidation of misacylated Glu-tRNA(Gln) in organisms which lack glutaminyl-tRNA synthetase. The reaction takes place in the presence of glutamine and ATP through an activated gamma-phospho-Glu-tRNA(Gln). The protein is Glutamyl-tRNA(Gln) amidotransferase subunit A of Fusobacterium nucleatum subsp. nucleatum (strain ATCC 25586 / DSM 15643 / BCRC 10681 / CIP 101130 / JCM 8532 / KCTC 2640 / LMG 13131 / VPI 4355).